The following is a 267-amino-acid chain: 3-methyl-2-oxobutanoate hydroxymethyltransferase (267 aa).

2 residues coordinate Mg(2+): aspartate 45 and aspartate 84. Residues 45 to 46, aspartate 84, and lysine 113 contribute to the 3-methyl-2-oxobutanoate site; that span reads DS. Glutamate 115 lines the Mg(2+) pocket. The Proton acceptor role is filled by glutamate 182.

It belongs to the PanB family. In terms of assembly, homodecamer; pentamer of dimers. Mg(2+) serves as cofactor.

The protein resides in the cytoplasm. It catalyses the reaction 3-methyl-2-oxobutanoate + (6R)-5,10-methylene-5,6,7,8-tetrahydrofolate + H2O = 2-dehydropantoate + (6S)-5,6,7,8-tetrahydrofolate. It participates in cofactor biosynthesis; coenzyme A biosynthesis. Functionally, catalyzes the reversible reaction in which hydroxymethyl group from 5,10-methylenetetrahydrofolate is transferred onto alpha-ketoisovalerate to form ketopantoate. This Saccharolobus islandicus (strain Y.G.57.14 / Yellowstone #1) (Sulfolobus islandicus) protein is 3-methyl-2-oxobutanoate hydroxymethyltransferase.